A 379-amino-acid chain; its full sequence is Lipid-A-disaccharide synthase (379 aa).

This sequence belongs to the LpxB family.

The enzyme catalyses a lipid X + a UDP-2-N,3-O-bis[(3R)-3-hydroxyacyl]-alpha-D-glucosamine = a lipid A disaccharide + UDP + H(+). It participates in bacterial outer membrane biogenesis; LPS lipid A biosynthesis. Its function is as follows. Condensation of UDP-2,3-diacylglucosamine and 2,3-diacylglucosamine-1-phosphate to form lipid A disaccharide, a precursor of lipid A, a phosphorylated glycolipid that anchors the lipopolysaccharide to the outer membrane of the cell. This Vibrio parahaemolyticus serotype O3:K6 (strain RIMD 2210633) protein is Lipid-A-disaccharide synthase.